A 1364-amino-acid polypeptide reads, in one-letter code: Trifunctional purine biosynthetic protein adenosine-3 (1364 aa).

The 208-residue stretch at 114–321 folds into the ATP-grasp domain; the sequence is KDFMLRHGIP…LFEVMQACCS (208 aa). 140–202 is a binding site for ATP; that stretch reads IRSAPYQALV…EELLEGEEIS (63 aa). The Mn(2+) site is built by glutamate 291 and asparagine 293. Residues 435–1154 are AIRS; it reads AIATAPGLSY…ARTQRMLSQP (720 aa). The tract at residues 1155 to 1364 is GART; the sequence is RKRVAVLISG…EAPKDIKDSQ (210 aa). A N(1)-(5-phospho-beta-D-ribosyl)glycinamide-binding site is contributed by 1166-1168; it reads GSN. Residues arginine 1221, 1246-1249, and asparagine 1263 each bind (6R)-10-formyltetrahydrofolate; that span reads MRIL. Histidine 1265 serves as the catalytic Proton donor. Residue 1297-1301 participates in (6R)-10-formyltetrahydrofolate binding; the sequence is DEGVD. Residue 1327 to 1330 coordinates N(1)-(5-phospho-beta-D-ribosyl)glycinamide; it reads HYAE.

In the N-terminal section; belongs to the GARS family. The protein in the central section; belongs to the AIR synthase family. It in the C-terminal section; belongs to the GART family.

The enzyme catalyses 5-phospho-beta-D-ribosylamine + glycine + ATP = N(1)-(5-phospho-beta-D-ribosyl)glycinamide + ADP + phosphate + H(+). It catalyses the reaction 2-formamido-N(1)-(5-O-phospho-beta-D-ribosyl)acetamidine + ATP = 5-amino-1-(5-phospho-beta-D-ribosyl)imidazole + ADP + phosphate + H(+). The catalysed reaction is N(1)-(5-phospho-beta-D-ribosyl)glycinamide + (6R)-10-formyltetrahydrofolate = N(2)-formyl-N(1)-(5-phospho-beta-D-ribosyl)glycinamide + (6S)-5,6,7,8-tetrahydrofolate + H(+). It participates in purine metabolism; IMP biosynthesis via de novo pathway; 5-amino-1-(5-phospho-D-ribosyl)imidazole from N(2)-formyl-N(1)-(5-phospho-D-ribosyl)glycinamide: step 2/2. It functions in the pathway purine metabolism; IMP biosynthesis via de novo pathway; N(1)-(5-phospho-D-ribosyl)glycinamide from 5-phospho-alpha-D-ribose 1-diphosphate: step 2/2. The protein operates within purine metabolism; IMP biosynthesis via de novo pathway; N(2)-formyl-N(1)-(5-phospho-D-ribosyl)glycinamide from N(1)-(5-phospho-D-ribosyl)glycinamide (10-formyl THF route): step 1/1. Functionally, trifunctional enzyme required for de novo purine biosynthesis. In Drosophila pseudoobscura pseudoobscura (Fruit fly), this protein is Trifunctional purine biosynthetic protein adenosine-3 (ade3).